Consider the following 416-residue polypeptide: Serine hydroxymethyltransferase (416 aa).

(6S)-5,6,7,8-tetrahydrofolate contacts are provided by residues Leu118 and 122–124 (GHL). At Lys226 the chain carries N6-(pyridoxal phosphate)lysine. (6S)-5,6,7,8-tetrahydrofolate contacts are provided by residues Glu242 and 350-352 (SPF).

Belongs to the SHMT family. As to quaternary structure, homodimer. The cofactor is pyridoxal 5'-phosphate.

Its subcellular location is the cytoplasm. It carries out the reaction (6R)-5,10-methylene-5,6,7,8-tetrahydrofolate + glycine + H2O = (6S)-5,6,7,8-tetrahydrofolate + L-serine. It participates in one-carbon metabolism; tetrahydrofolate interconversion. Its pathway is amino-acid biosynthesis; glycine biosynthesis; glycine from L-serine: step 1/1. Its function is as follows. Catalyzes the reversible interconversion of serine and glycine with tetrahydrofolate (THF) serving as the one-carbon carrier. This reaction serves as the major source of one-carbon groups required for the biosynthesis of purines, thymidylate, methionine, and other important biomolecules. Also exhibits THF-independent aldolase activity toward beta-hydroxyamino acids, producing glycine and aldehydes, via a retro-aldol mechanism. This chain is Serine hydroxymethyltransferase, found in Helicobacter pylori (strain G27).